The sequence spans 1211 residues: DNA-directed RNA polymerase subunit beta' (1211 aa).

The Zn(2+) site is built by cysteine 60, cysteine 62, cysteine 75, and cysteine 78. 3 residues coordinate Mg(2+): aspartate 450, aspartate 452, and aspartate 454. 4 residues coordinate Zn(2+): cysteine 819, cysteine 893, cysteine 900, and cysteine 903.

The protein belongs to the RNA polymerase beta' chain family. In terms of assembly, the RNAP catalytic core consists of 2 alpha, 1 beta, 1 beta' and 1 omega subunit. When a sigma factor is associated with the core the holoenzyme is formed, which can initiate transcription. It depends on Mg(2+) as a cofactor. Requires Zn(2+) as cofactor.

It catalyses the reaction RNA(n) + a ribonucleoside 5'-triphosphate = RNA(n+1) + diphosphate. DNA-dependent RNA polymerase catalyzes the transcription of DNA into RNA using the four ribonucleoside triphosphates as substrates. This Streptococcus equi subsp. zooepidemicus (strain H70) protein is DNA-directed RNA polymerase subunit beta'.